The following is a 55-amino-acid chain: ATP synthase F(0) complex subunit 8 (55 aa).

Residues 4 to 24 (LNPAPWFAILVFSWLVFLTVI) form a helical membrane-spanning segment. The segment at 36–55 (EPTSQSTEKTKPEPWNWPWH) is disordered.

Belongs to the ATPase protein 8 family. As to quaternary structure, component of the ATP synthase complex composed at least of ATP5F1A/subunit alpha, ATP5F1B/subunit beta, ATP5MC1/subunit c (homooctomer), MT-ATP6/subunit a, MT-ATP8/subunit 8, ATP5ME/subunit e, ATP5MF/subunit f, ATP5MG/subunit g, ATP5MK/subunit k, ATP5MJ/subunit j, ATP5F1C/subunit gamma, ATP5F1D/subunit delta, ATP5F1E/subunit epsilon, ATP5PF/subunit F6, ATP5PB/subunit b, ATP5PD/subunit d, ATP5PO/subunit OSCP. ATP synthase complex consists of a soluble F(1) head domain (subunits alpha(3) and beta(3)) - the catalytic core - and a membrane F(0) domain - the membrane proton channel (subunits c, a, 8, e, f, g, k and j). These two domains are linked by a central stalk (subunits gamma, delta, and epsilon) rotating inside the F1 region and a stationary peripheral stalk (subunits F6, b, d, and OSCP).

It is found in the mitochondrion membrane. Its function is as follows. Subunit 8, of the mitochondrial membrane ATP synthase complex (F(1)F(0) ATP synthase or Complex V) that produces ATP from ADP in the presence of a proton gradient across the membrane which is generated by electron transport complexes of the respiratory chain. ATP synthase complex consist of a soluble F(1) head domain - the catalytic core - and a membrane F(1) domain - the membrane proton channel. These two domains are linked by a central stalk rotating inside the F(1) region and a stationary peripheral stalk. During catalysis, ATP synthesis in the catalytic domain of F(1) is coupled via a rotary mechanism of the central stalk subunits to proton translocation. In vivo, can only synthesize ATP although its ATP hydrolase activity can be activated artificially in vitro. Part of the complex F(0) domain. This chain is ATP synthase F(0) complex subunit 8, found in Salvelinus alpinus (Arctic char).